We begin with the raw amino-acid sequence, 408 residues long: Snake venom 5'-nucleotidase (408 aa).

Positions 54 and 77 each coordinate Zn(2+). Asparagine 167 and asparagine 181 each carry an N-linked (GlcNAc...) asparagine glycan. Cystine bridges form between cysteine 187/cysteine 192 and cysteine 199/cysteine 221. Arginine 188 provides a ligand contact to AMP. The AMP site is built by asparagine 224, arginine 229, and phenylalanine 252. The cysteines at positions 311 and 314 are disulfide-linked. Phenylalanine 335 and aspartate 341 together coordinate AMP. 2 consecutive propeptides (removed in mature form) follow at residues 385 to 388 (DGTL) and 385 to 408 (DGTL…FFIL).

The protein belongs to the 5'-nucleotidase family. As to quaternary structure, homodimer. In terms of processing, venom 5'-nucleotidases (or a part thereof) may be released into the venom via exosome-like vesicles. They may be attached via a GPI anchor to the membrane of these vesicles. Soluble forms of 5'-nucleotidase might be released by cleavage of the ectodomain in the exosome-like vesicles or venom gland cells. Expressed by the venom gland.

The protein localises to the membrane. It catalyses the reaction a ribonucleoside 5'-phosphate + H2O = a ribonucleoside + phosphate. The catalysed reaction is AMP + H2O = adenosine + phosphate. It carries out the reaction GMP + H2O = guanosine + phosphate. The enzyme catalyses ADP + H2O = AMP + phosphate + H(+). Is potently inhibited by metal ions Fe(3+), Cu(2+) and Zn(2+). Is enhanced by Mn(2+). Ca(2+) and Mg(2+) have no effect. Hydrolyzes nucleotides into nucleosides. Prefers AMP as the substrate but also cleaves GMP and ADP. Does not affect AMP, cAMP and cGMP. Inhibits ADP- and collagen-induced platelet aggregation. Snake venom 5'-nucleotidases are widely distributed among venomous snake taxa, but there is a lack of information about their biological activities. They have been shown to inhibit platelet aggregation. This effect may be due to the liberation of inhibitory AMP or adenosine by its action on ADP released upon initiation of aggregation. Venom 5'-nucleotidases are also known to synergistically act in vivo with other toxins like ADPases, phospholipases, and disintegrins to exert a more pronounced anti-coagulant effect. In Macrovipera lebetinus (Levantine viper), this protein is Snake venom 5'-nucleotidase.